The primary structure comprises 377 residues: Serine/threonine-protein phosphatase PP2A-2 catalytic subunit (377 aa).

Residues 1–66 (MDMEIDDPMH…SGIADHKSSK (66 aa)) form a disordered region. The span at 28–40 (DDGKNNTKARSND) shows a compositional bias: basic and acidic residues. Phosphoserine is present on Ser-38. Position 43 is a phosphothreonine (Thr-43). Residues Asp-125, His-127, Asp-153, and Asn-185 each coordinate Mn(2+). The Proton donor role is filled by His-186. Mn(2+) is bound by residues His-235 and His-309. Leu-377 is modified (leucine methyl ester).

Belongs to the PPP phosphatase family. PP-2A subfamily. In terms of assembly, inactivated in a complex with phosphatase methylesterase PPE1 (PP2Ai). Interacts with phosphatase 2A activator RRD2, which can reactivate PP2Ai by dissociating the catalytic subunit from the complex. Interacts with TAP42. It depends on Mn(2+) as a cofactor. Post-translationally, reversibly methyl esterified on Leu-377 by leucine carboxyl methyltransferase 1 (PPM1) and protein phosphatase methylesterase 1 (PPE1). Carboxyl methylation influences the affinity of the catalytic subunit for the different regulatory subunits, thereby modulating the PP2A holoenzyme's substrate specificity, enzyme activity and cellular localization.

It catalyses the reaction O-phospho-L-seryl-[protein] + H2O = L-seryl-[protein] + phosphate. The catalysed reaction is O-phospho-L-threonyl-[protein] + H2O = L-threonyl-[protein] + phosphate. Functionally, exact function not known, phosphatase 2A performs an essential cellular function. The polypeptide is Serine/threonine-protein phosphatase PP2A-2 catalytic subunit (PPH22) (Saccharomyces cerevisiae (strain ATCC 204508 / S288c) (Baker's yeast)).